A 447-amino-acid polypeptide reads, in one-letter code: NADH-ubiquinone oxidoreductase chain 4 (447 aa).

A run of 13 helical transmembrane segments spans residues 28 to 48 (IFLL…FNYI), 56 to 76 (MVSY…LMAS), 89 to 109 (FVFM…SMSV), 110 to 130 (FMFY…ILGW), 141 to 161 (VYLL…IFYI), 183 to 203 (LLYL…LVHL), 213 to 233 (PVSG…YGLL), 246 to 266 (YNYW…LVCL), 273 to 293 (ALIA…LLTM), 298 to 318 (LTGS…LFCL), 331 to 351 (LLIN…WFLL), 374 to 394 (IVSW…FSAA), and 409 to 431 (YSGV…LHWL).

This sequence belongs to the complex I subunit 4 family.

The protein localises to the mitochondrion membrane. The catalysed reaction is a ubiquinone + NADH + 5 H(+)(in) = a ubiquinol + NAD(+) + 4 H(+)(out). Its function is as follows. Core subunit of the mitochondrial membrane respiratory chain NADH dehydrogenase (Complex I) that is believed to belong to the minimal assembly required for catalysis. Complex I functions in the transfer of electrons from NADH to the respiratory chain. The immediate electron acceptor for the enzyme is believed to be ubiquinone. The chain is NADH-ubiquinone oxidoreductase chain 4 (mt:ND4) from Anopheles gambiae (African malaria mosquito).